We begin with the raw amino-acid sequence, 460 residues long: Acetyl-coenzyme A carboxylase carboxyl transferase subunit beta, chloroplastic (460 aa).

One can recognise a CoA carboxyltransferase N-terminal domain in the interval 179–460; sequence LWVQCESCYG…GFFPLTQNGN (282 aa). Residues Cys-183, Cys-186, Cys-202, and Cys-205 each contribute to the Zn(2+) site. The C4-type zinc-finger motif lies at 183–205; the sequence is CESCYGLNYKKFFKSKMNICEHC.

The protein belongs to the AccD/PCCB family. Acetyl-CoA carboxylase is a heterohexamer composed of biotin carboxyl carrier protein, biotin carboxylase and 2 subunits each of ACCase subunit alpha and ACCase plastid-coded subunit beta (accD). Requires Zn(2+) as cofactor.

The protein resides in the plastid. The protein localises to the chloroplast stroma. It carries out the reaction N(6)-carboxybiotinyl-L-lysyl-[protein] + acetyl-CoA = N(6)-biotinyl-L-lysyl-[protein] + malonyl-CoA. It functions in the pathway lipid metabolism; malonyl-CoA biosynthesis; malonyl-CoA from acetyl-CoA: step 1/1. Component of the acetyl coenzyme A carboxylase (ACC) complex. Biotin carboxylase (BC) catalyzes the carboxylation of biotin on its carrier protein (BCCP) and then the CO(2) group is transferred by the transcarboxylase to acetyl-CoA to form malonyl-CoA. This is Acetyl-coenzyme A carboxylase carboxyl transferase subunit beta, chloroplastic from Cicer arietinum (Chickpea).